The sequence spans 225 residues: ATP-dependent Clp protease proteolytic subunit (225 aa).

Ser126 acts as the Nucleophile in catalysis. The active site involves His151.

This sequence belongs to the peptidase S14 family. As to quaternary structure, fourteen ClpP subunits assemble into 2 heptameric rings which stack back to back to give a disk-like structure with a central cavity, resembling the structure of eukaryotic proteasomes.

The protein localises to the cytoplasm. The catalysed reaction is Hydrolysis of proteins to small peptides in the presence of ATP and magnesium. alpha-casein is the usual test substrate. In the absence of ATP, only oligopeptides shorter than five residues are hydrolyzed (such as succinyl-Leu-Tyr-|-NHMec, and Leu-Tyr-Leu-|-Tyr-Trp, in which cleavage of the -Tyr-|-Leu- and -Tyr-|-Trp bonds also occurs).. Cleaves peptides in various proteins in a process that requires ATP hydrolysis. Has a chymotrypsin-like activity. Plays a major role in the degradation of misfolded proteins. In Psychrobacter arcticus (strain DSM 17307 / VKM B-2377 / 273-4), this protein is ATP-dependent Clp protease proteolytic subunit.